A 351-amino-acid chain; its full sequence is Cytosolic sulfotransferase 9 (351 aa).

Basic and acidic residues predominate over residues 1 to 11; that stretch reads MDEKDILRNLR. The disordered stretch occupies residues 1 to 24; it reads MDEKDILRNLREEEEEEEENQSEE. Residues 12-22 show a composition bias toward acidic residues; that stretch reads EEEEEEEENQS. 80–85 lines the 3'-phosphoadenylyl sulfate pocket; sequence KSGTTW. Histidine 152 serves as the catalytic Proton acceptor. 3'-phosphoadenylyl sulfate is bound by residues arginine 174, serine 182, tyrosine 252, and 317-319; that span reads RKG.

This sequence belongs to the sulfotransferase 1 family. In terms of tissue distribution, expressed in roots and leaves.

The protein resides in the cytoplasm. Sulfotransferase that utilizes 3'-phospho-5'-adenylyl sulfate (PAPS) as sulfonate donor. No activity with brassinosteroids. This Arabidopsis thaliana (Mouse-ear cress) protein is Cytosolic sulfotransferase 9 (STO9).